Consider the following 752-residue polypeptide: Microtubule-associated protein tau (752 aa).

Positions 1 to 567 are disordered; sequence MAEPRQEFDT…PVPMPDLKNV (567 aa). Alanine 2 is modified (N-acetylalanine). Tyrosine 18 carries the post-translational modification Phosphotyrosine. A Glycyl lysine isopeptide (Lys-Gly) (interchain with G-Cter in ubiquitin) cross-link involves residue lysine 33. A phosphoserine mark is found at serine 35 and serine 50. Polar residues predominate over residues 50–60; the sequence is SETSDAKSTPT. 3 positions are modified to phosphothreonine: threonine 58, threonine 60, and threonine 100. Over residues 142-151 the composition is skewed to polar residues; the sequence is SDWTHQQVPS. The span at 173–182 shows a compositional bias: basic and acidic residues; that stretch reads RPEDVERSHP. 2 positions are modified to phosphoserine: serine 191 and serine 204. Over residues 192 to 204 the composition is skewed to basic and acidic residues; the sequence is PQKEAWGKDRLGS. Acidic residues predominate over residues 205-218; it reads EEEVDEDITMDESS. Over residues 219–229 the composition is skewed to low complexity; sequence QESPPSQASLA. Polar residues predominate over residues 233–252; it reads ATPQARSVSASGVSGETTSI. Basic and acidic residues-rich tracts occupy residues 289-313 and 374-385; these read EEGHEAAPEFTFHVEIKASAPKEQD and SKDRTGNDEKKA. Composition is skewed to polar residues over residues 387-400 and 432-446; these read TSTPSCAKTPSNRP and KYVSSVTPRNGSPGT. Threonine 464 is subject to Phosphothreonine. Residue arginine 466 is modified to Omega-N-methylarginine. Lysine 474 is modified (N6,N6-dimethyllysine; alternate). Position 474 is an N6-acetyllysine; alternate (lysine 474). Residues threonine 480, threonine 486, and threonine 487 each carry the phosphothreonine modification. Serine 489 carries the post-translational modification Phosphoserine. Position 492 is a phosphothreonine (threonine 492). 3 positions are modified to phosphoserine: serine 496, serine 502, and serine 506. The span at 498-525 shows a compositional bias: low complexity; that stretch reads EPPKSGERSGYSSPGSPGTPGSRSRTPS. Position 508 is a phosphotyrosine (tyrosine 508). Phosphoserine is present on residues serine 509 and serine 510. At serine 513 the chain carries Phosphoserine; by CK1, PDPK1 and TTBK1. Phosphothreonine occurs at positions 516 and 523. Serine 525 is subject to Phosphoserine. Phosphothreonine is present on threonine 528. Lysine 536 carries the post-translational modification N6-acetyllysine. A Phosphothreonine modification is found at threonine 542. Residues serine 546 and serine 548 each carry the phosphoserine modification. 4 Tau/MAP repeats span residues 555–585, 586–616, 617–647, and 648–679; these read QTAPVPMPDLKNVRSKIGSTENLKHQPGGGK, VQIINKKLDLSNVQSKCGSKDNIKHVPGGGS, VHIVYKPVDLSKVTSKCGSLGNIHHKPGGGQ, and VEVKSEKLDFKDRVQSKIGSLDNITHVPGGGN. A Glycyl lysine isopeptide (Lys-Gly) (interchain with G-Cter in ubiquitin) cross-link involves residue lysine 565. At lysine 570 the chain carries N6-acetyllysine; alternate. Lysine 570 is subject to N6-methyllysine; alternate. Residue lysine 570 forms a Glycyl lysine isopeptide (Lys-Gly) (interchain with G-Cter in ubiquitin); alternate linkage. Residue serine 573 is modified to Phosphoserine. Lysine 578 is covalently cross-linked (Glycyl lysine isopeptide (Lys-Gly) (interchain with G-Cter in ubiquitin)). An N6-acetyllysine; alternate modification is found at lysine 592. Lysine 592 is covalently cross-linked (Glycyl lysine isopeptide (Lys-Gly) (interchain with G-Cter in ubiquitin); alternate). Phosphoserine occurs at positions 596 and 600. The residue at position 601 (lysine 601) is an N6-acetyllysine. Residues cysteine 602 and cysteine 633 are joined by a disulfide bond. Position 604 is a phosphoserine (serine 604). Lysine 609 is modified (N6-acetyllysine; alternate). A Glycyl lysine isopeptide (Lys-Gly) (interchain with G-Cter in ubiquitin); alternate cross-link involves residue lysine 609. Phosphoserine is present on serine 616. Position 622 is an N6,N6-dimethyllysine; alternate (lysine 622). Lysine 622, lysine 628, and lysine 632 each carry N6-acetyllysine; alternate. Glycyl lysine isopeptide (Lys-Gly) (interchain with G-Cter in ubiquitin); alternate cross-links involve residues lysine 622, lysine 628, and lysine 632. Serine 635 is subject to Phosphoserine. 3 positions are modified to N6-acetyllysine; alternate: lysine 642, lysine 654, and lysine 658. Glycyl lysine isopeptide (Lys-Gly) (interchain with G-Cter in ubiquitin); alternate cross-links involve residues lysine 642, lysine 654, and lysine 658. The residue at position 660 (arginine 660) is an Omega-N-methylarginine. At serine 663 the chain carries Phosphoserine. Residue lysine 664 forms a Glycyl lysine isopeptide (Lys-Gly) (interchain with G-Cter in ubiquitin) linkage. A Phosphoserine modification is found at serine 667. Lysine 680 is subject to N6-acetyllysine; alternate. A Glycyl lysine isopeptide (Lys-Gly) (interchain with G-Cter in ubiquitin); alternate cross-link involves residue lysine 680. Lysine 686 is covalently cross-linked (Glycyl lysine isopeptide (Lys-Gly) (interchain with G-Cter in ubiquitin)). Lysine 696 carries the N6-acetyllysine; alternate modification. A Glycyl lysine isopeptide (Lys-Gly) (interchain with G-Cter in ubiquitin); alternate cross-link involves residue lysine 696. Position 705 is a phosphotyrosine (tyrosine 705). Serine 707 is modified (phosphoserine; by CK1 and PDPK1). A Phosphoserine modification is found at serine 711. At threonine 714 the chain carries Phosphothreonine. Serine 715 bears the Phosphoserine; by CK1 and PDPK1 mark. A phosphoserine mark is found at serine 720, serine 727, and serine 733. Threonine 738 carries the post-translational modification Phosphothreonine.

Interacts with MARK1, MARK2, MARK3 and MARK4. Interacts with SQSTM1 when polyubiquitinated. Interacts with PSMC2 through SQSTM1. Interacts with FKBP4. Binds to CSNK1D. Interacts with SGK1. Interacts with EPM2A; the interaction dephosphorylates MAPT at Ser-388. Interacts with PIN1. Interacts with LRRK2. Interacts with LRP1, leading to endocytosis; this interaction is reduced in the presence of LRPAP1/RAP. In terms of processing, polyubiquitinated. Requires functional TRAF6 and may provoke SQSTM1-dependent degradation by the proteasome. Post-translationally, phosphorylated at various serine and threonine residues in S-P or T-P motifs by proline-directed protein kinases (PDPK1, CDK1, CDK5, GSK3, MAPK) (a few sites per protein in interphase, more in mitosis), and at serine residues in K-X-G-S motifs by MAP/microtubule affinity-regulating kinase (MARK1, MARK2, MARK3, MARK4), causing detachment from microtubules, and their disassembly. Fetal Tau is much more phosphorylated than adult Tau. Phosphorylation at Ser-573 by BRSK1 and BRSK2 in neurons affects ability to bind microtubules and plays a role in neuron polarization. Phosphorylated by PHK. Dephosphorylation at several serine and threonine residues by the serine/threonine phosphatase PPP5C. Phosphorylation at Ser-204 by SGK1 mediates microtubule depolymerization and neurite formation in hippocampal neurons. As to expression, expressed in neurons. The larger forms (isoform tau-A and isoform tau-B) are preferentially expressed in the peripheral nervous system while the other are expressed in the central nervous system. Low amounts of the larger forms are also found in limited areas of the CNS.

Its subcellular location is the cytoplasm. It localises to the cytosol. It is found in the cell membrane. The protein resides in the cytoskeleton. The protein localises to the cell projection. Its subcellular location is the axon. It localises to the dendrite. It is found in the secreted. In terms of biological role, promotes microtubule assembly and stability, and might be involved in the establishment and maintenance of neuronal polarity. The C-terminus binds axonal microtubules while the N-terminus binds neural plasma membrane components, suggesting that tau functions as a linker protein between both. Axonal polarity is predetermined by tau localization (in the neuronal cell) in the domain of the cell body defined by the centrosome. The short isoforms allow plasticity of the cytoskeleton whereas the longer isoforms may preferentially play a role in its stabilization. The chain is Microtubule-associated protein tau from Rattus norvegicus (Rat).